Here is a 155-residue protein sequence, read N- to C-terminus: Immunoglobulin domain-containing protein oig-4 (155 aa).

The first 22 residues, 1 to 22, serve as a signal peptide directing secretion; the sequence is MSFRLWGRCIFFFCFLLEAIDS. N55 and N114 each carry an N-linked (GlcNAc...) asparagine glycan. The Ig-like C2-type domain occupies 73–154; it reads GYKLLIICKA…MAKNFKAEYT (82 aa). A disulfide bridge connects residues C80 and C136.

In terms of assembly, interacts with the non-alpha subunit of nicotinic acetylcholine receptor unc-29 and lev-10 to stabilize the complex formed between unc-29 and lev-10. Expressed in body wall muscle cells, the pharyngeal muscle cell pm6 and in four head neurons.

It localises to the synapse. The protein resides in the secreted. Its function is as follows. Required for the localization of acetylcholine receptors at neuromuscular junctions and for subsequently controlling the response evoked by receptor stimulation. The sequence is that of Immunoglobulin domain-containing protein oig-4 from Caenorhabditis elegans.